A 575-amino-acid polypeptide reads, in one-letter code: Putative export ATP-binding/permease protein RBE_0492 (575 aa).

The ABC transmembrane type-1 domain occupies 20–303; the sequence is LIIVIISLLS…IFELLSEMHL (284 aa). A run of 6 helical transmembrane segments spans residues 21 to 41, 61 to 81, 135 to 155, 158 to 178, 242 to 262, and 277 to 297; these read IIVIISLLSVSLALLLIGNVF, ILYICLLIIILSIASFFRSYF, FLSFFIRNSVMLVGSIILMFF, FKLASIVIITIPLLLIPIIKF, ALFFAFSMAFIFLGVTLVIWI, and IISFIYYAIIAGFSSGGIFEL. An ABC transporter domain is found at 336–571; it reads LEFKNVNFSY…SDLYRTIYKE (236 aa). 371-378 lines the ATP pocket; sequence GRSGSGKS.

It belongs to the ABC transporter superfamily. As to quaternary structure, homodimer.

It is found in the cell inner membrane. Functionally, part of an ABC transporter complex. Transmembrane domains (TMD) form a pore in the inner membrane and the ATP-binding domain (NBD) is responsible for energy generation. The chain is Putative export ATP-binding/permease protein RBE_0492 from Rickettsia bellii (strain RML369-C).